Here is a 435-residue protein sequence, read N- to C-terminus: U-box domain-containing protein 36 (435 aa).

Residues 227 to 345 adopt a coiled-coil conformation; the sequence is EAEASKRKAR…LKGKREEEEA (119 aa). A U-box domain is found at 352-426; sequence EPPQYFICPI…QEWLQLRELL (75 aa).

The catalysed reaction is S-ubiquitinyl-[E2 ubiquitin-conjugating enzyme]-L-cysteine + [acceptor protein]-L-lysine = [E2 ubiquitin-conjugating enzyme]-L-cysteine + N(6)-ubiquitinyl-[acceptor protein]-L-lysine.. The protein operates within protein modification; protein ubiquitination. Functions as an E3 ubiquitin ligase. The polypeptide is U-box domain-containing protein 36 (PUB36) (Arabidopsis thaliana (Mouse-ear cress)).